The chain runs to 444 residues: Elongation factor 1-alpha (444 aa).

The region spanning 15-236 (KPHINLAVVG…VLDTFQPPPR (222 aa)) is the tr-type G domain. The interval 24-31 (GHVDNGKS) is G1. Position 24 to 31 (24 to 31 (GHVDNGKS)) interacts with GTP. Serine 31 is a Mg(2+) binding site. A G2 region spans residues 80–84 (GVTIE). The interval 101–104 (DLPG) is G3. Residues 101 to 105 (DLPGH) and 163 to 166 (NKMD) each bind GTP. A G4 region spans residues 163–166 (NKMD). Residues 202–204 (SAI) are G5.

It belongs to the TRAFAC class translation factor GTPase superfamily. Classic translation factor GTPase family. EF-Tu/EF-1A subfamily.

It is found in the cytoplasm. It carries out the reaction GTP + H2O = GDP + phosphate + H(+). Its function is as follows. GTP hydrolase that promotes the GTP-dependent binding of aminoacyl-tRNA to the A-site of ribosomes during protein biosynthesis. The polypeptide is Elongation factor 1-alpha (Pyrobaculum calidifontis (strain DSM 21063 / JCM 11548 / VA1)).